A 366-amino-acid polypeptide reads, in one-letter code: Histidinol-phosphate aminotransferase 2 (366 aa).

Residues 1-11 (MQVKDQLSSLQ) are compositionally biased toward polar residues. A disordered region spans residues 1-21 (MQVKDQLSSLQPYKPGKSPEQ). Position 222 is an N6-(pyridoxal phosphate)lysine (lysine 222).

This sequence belongs to the class-II pyridoxal-phosphate-dependent aminotransferase family. Histidinol-phosphate aminotransferase subfamily. As to quaternary structure, homodimer. It depends on pyridoxal 5'-phosphate as a cofactor.

The catalysed reaction is L-histidinol phosphate + 2-oxoglutarate = 3-(imidazol-4-yl)-2-oxopropyl phosphate + L-glutamate. It participates in amino-acid biosynthesis; L-histidine biosynthesis; L-histidine from 5-phospho-alpha-D-ribose 1-diphosphate: step 7/9. This chain is Histidinol-phosphate aminotransferase 2 (hisC2), found in Bacillus cereus (strain ATCC 14579 / DSM 31 / CCUG 7414 / JCM 2152 / NBRC 15305 / NCIMB 9373 / NCTC 2599 / NRRL B-3711).